The chain runs to 260 residues: MTDILNKILTAKAQEVAAQKAAVNAEHIRALAAEAAPVRSFIGSIRGKHRLNLPAVIAEIKKASPSKGLIRPDFRPAEIARAYENAGAACLSVLTDEPYFQGSPEYLKQAREAVSLPVLRKDFIIDEYQVYQARAWGADAVLLIAAALEQEQLERFEAVAHELGMTVLLELHDESELEKCRNLTTPLWGVNNRNLRTFEVSLDQTLSLLPALEGKTVVTESGITGKADVEFMQSRGVHTFLIGETFMRADNIEAEVGKLF.

This sequence belongs to the TrpC family.

The catalysed reaction is 1-(2-carboxyphenylamino)-1-deoxy-D-ribulose 5-phosphate + H(+) = (1S,2R)-1-C-(indol-3-yl)glycerol 3-phosphate + CO2 + H2O. It participates in amino-acid biosynthesis; L-tryptophan biosynthesis; L-tryptophan from chorismate: step 4/5. In Neisseria meningitidis serogroup C / serotype 2a (strain ATCC 700532 / DSM 15464 / FAM18), this protein is Indole-3-glycerol phosphate synthase.